The chain runs to 534 residues: Cysteine/serine-rich nuclear protein 2 (534 aa).

At methionine 1 the chain carries N-acetylmethionine. 2 disordered regions span residues 1-52 (MDAF…FTPT) and 480-534 (DCGL…PLAV). Positions 31-40 (SSDSADSCDS) are enriched in low complexity. Positions 42 to 52 (NPPTTASFTPT) are enriched in polar residues. Residues 480–492 (DCGLKEPESEDLH) are compositionally biased toward basic and acidic residues.

This sequence belongs to the AXUD1 family. Highest expression detected in thymus, brain and ovary. Low levels detected in naive T-cells.

It is found in the nucleus. Binds to the consensus sequence 5'-AGAGTG-3' and has transcriptional activator activity. May play a role in apoptosis. In Mus musculus (Mouse), this protein is Cysteine/serine-rich nuclear protein 2 (Csrnp2).